Here is a 476-residue protein sequence, read N- to C-terminus: Ribulose bisphosphate carboxylase large chain (476 aa).

Substrate-binding residues include N124 and T174. K176 serves as the catalytic Proton acceptor. Substrate is bound at residue K178. Mg(2+)-binding residues include K202, D204, and E205. At K202 the chain carries N6-carboxylysine. Catalysis depends on H295, which acts as the Proton acceptor. Residues R296, H328, and S380 each coordinate substrate.

The protein belongs to the RuBisCO large chain family. Type I subfamily. In terms of assembly, heterohexadecamer of 8 large chains and 8 small chains; disulfide-linked. The disulfide link is formed within the large subunit homodimers. Mg(2+) is required as a cofactor. In terms of processing, the disulfide bond which can form in the large chain dimeric partners within the hexadecamer appears to be associated with oxidative stress and protein turnover.

The protein localises to the carboxysome. It carries out the reaction 2 (2R)-3-phosphoglycerate + 2 H(+) = D-ribulose 1,5-bisphosphate + CO2 + H2O. The enzyme catalyses D-ribulose 1,5-bisphosphate + O2 = 2-phosphoglycolate + (2R)-3-phosphoglycerate + 2 H(+). Its function is as follows. RuBisCO catalyzes two reactions: the carboxylation of D-ribulose 1,5-bisphosphate, the primary event in carbon dioxide fixation, as well as the oxidative fragmentation of the pentose substrate in the photorespiration process. Both reactions occur simultaneously and in competition at the same active site. The polypeptide is Ribulose bisphosphate carboxylase large chain (Nostoc punctiforme (strain ATCC 29133 / PCC 73102)).